The chain runs to 370 residues: Cytochrome b (370 aa).

The next 4 membrane-spanning stretches (helical) occupy residues 30–50 (FGSM…FLAF), 74–96 (WIFR…LHIF), 109–129 (VWMS…MGYV), and 175–195 (FFVL…GHLI). The heme b site is built by histidine 80 and histidine 94. The heme b site is built by histidine 179 and histidine 193. Residue histidine 198 participates in a ubiquinone binding. The next 4 membrane-spanning stretches (helical) occupy residues 221 to 240 (YIGK…VLSL), 284 to 304 (VLGV…ALVN), 316 to 336 (FLVF…QCMV), and 342 to 362 (VLSP…LGIF).

This sequence belongs to the cytochrome b family. In terms of assembly, the main subunits of complex b-c1 are: cytochrome b, cytochrome c1 and the Rieske protein. Heme b is required as a cofactor.

Its subcellular location is the mitochondrion inner membrane. Its function is as follows. Component of the ubiquinol-cytochrome c reductase complex (complex III or cytochrome b-c1 complex) that is part of the mitochondrial respiratory chain. The b-c1 complex mediates electron transfer from ubiquinol to cytochrome c. Contributes to the generation of a proton gradient across the mitochondrial membrane that is then used for ATP synthesis. This chain is Cytochrome b (ctb-1), found in Caenorhabditis briggsae.